The following is a 168-amino-acid chain: MAEPWGNELASAAARGDLEQLTSLLQNNVNVNAQNGFGRTALQVMKLGNPEIARRLLLRGANPDLKDRTGFAVIHDAARAGFLDTLQTLLEFQADVNIEDNEGNLPLHLAAKEGHLRVVEFLVKHTASNVGHRNHKGDTACDLARLYGRNEVVSLMQANGAGGATNLQ.

ANK repeat units lie at residues 4–33, 37–65, 69–98, and 102–132; these read PWGN…NVNA, FGRT…NPDL, TGFA…DVNI, and EGNL…NVGH.

Belongs to the CDKN2 cyclin-dependent kinase inhibitor family. In terms of assembly, heterodimer of p18 with CDK6. Highest levels found in skeletal muscle. Also found in pancreas and heart.

Functionally, interacts strongly with CDK6, weakly with CDK4. Inhibits cell growth and proliferation with a correlated dependence on endogenous retinoblastoma protein RB. In Homo sapiens (Human), this protein is Cyclin-dependent kinase 4 inhibitor C (CDKN2C).